Here is a 342-residue protein sequence, read N- to C-terminus: Immune-associated nucleotide-binding protein 9 (342 aa).

An AIG1-type G domain is found at 22–229 (NPKRTLVLVG…YSDELFHELQ (208 aa)). Positions 31–38 (GRTGNGKS) are G1. GTP is bound by residues 31 to 39 (GRTGNGKSA) and Ser-52. Positions 58–62 (GVTST) are G2. The tract at residues 80–83 (DTPG) is G3. A G4 region spans residues 149 to 152 (TGGD). Positions 188-190 (NNK) are G5. Residue Asn-189 participates in GTP binding. The stretch at 276-342 (ETKLRDTAKR…QKKLGKCINL (67 aa)) forms a coiled coil.

Belongs to the TRAFAC class TrmE-Era-EngA-EngB-Septin-like GTPase superfamily. AIG1/Toc34/Toc159-like paraseptin GTPase family. IAN subfamily. As to expression, mainly expressed in leaves.

In Arabidopsis thaliana (Mouse-ear cress), this protein is Immune-associated nucleotide-binding protein 9.